A 186-amino-acid chain; its full sequence is Acireductone dioxygenase (186 aa).

Fe(2+)-binding residues include His-103, His-105, Glu-109, and His-147. Ni(2+)-binding residues include His-103, His-105, Glu-109, and His-147.

This sequence belongs to the acireductone dioxygenase (ARD) family. In terms of assembly, monomer. Fe(2+) is required as a cofactor. The cofactor is Ni(2+).

It catalyses the reaction 1,2-dihydroxy-5-(methylsulfanyl)pent-1-en-3-one + O2 = 3-(methylsulfanyl)propanoate + CO + formate + 2 H(+). It carries out the reaction 1,2-dihydroxy-5-(methylsulfanyl)pent-1-en-3-one + O2 = 4-methylsulfanyl-2-oxobutanoate + formate + 2 H(+). It functions in the pathway amino-acid biosynthesis; L-methionine biosynthesis via salvage pathway; L-methionine from S-methyl-5-thio-alpha-D-ribose 1-phosphate: step 5/6. Catalyzes 2 different reactions between oxygen and the acireductone 1,2-dihydroxy-3-keto-5-methylthiopentene (DHK-MTPene) depending upon the metal bound in the active site. Fe-containing acireductone dioxygenase (Fe-ARD) produces formate and 2-keto-4-methylthiobutyrate (KMTB), the alpha-ketoacid precursor of methionine in the methionine recycle pathway. Ni-containing acireductone dioxygenase (Ni-ARD) produces methylthiopropionate, carbon monoxide and formate, and does not lie on the methionine recycle pathway. The protein is Acireductone dioxygenase of Parasynechococcus marenigrum (strain WH8102).